We begin with the raw amino-acid sequence, 1067 residues long: Sal-like protein 4 (1067 aa).

The tract at residues 1-62 (MSRRKQAKPQ…SEDSIPVKRP (62 aa)) is disordered. The span at 15–42 (EEGQGEQPQQLPSPDLAEALAAEEPGAP) shows a compositional bias: low complexity. Phosphoserine is present on Ser53. A C2H2-type 1; atypical zinc finger spans residues 68–90 (HICNKCCAEFFSLSEFMEHKKSC). The disordered stretch occupies residues 115–140 (ALSHQLGSPSNKDSLQENGSSSGDLK). Residues 119–137 (QLGSPSNKDSLQENGSSSG) are compositionally biased toward polar residues. A Glycyl lysine isopeptide (Lys-Gly) (interchain with G-Cter in SUMO1); alternate cross-link involves residue Lys151. Lys151 participates in a covalent cross-link: Glycyl lysine isopeptide (Lys-Gly) (interchain with G-Cter in SUMO2); alternate. Residues Lys170, Lys185, and Lys291 each participate in a glycyl lysine isopeptide (Lys-Gly) (interchain with G-Cter in SUMO2) cross-link. Ser308 is subject to Phosphoserine. Residue Lys317 forms a Glycyl lysine isopeptide (Lys-Gly) (interchain with G-Cter in SUMO1); alternate linkage. Lys317 participates in a covalent cross-link: Glycyl lysine isopeptide (Lys-Gly) (interchain with G-Cter in SUMO2); alternate. Lys377 is covalently cross-linked (Glycyl lysine isopeptide (Lys-Gly) (interchain with G-Cter in SUMO2)). A Glycyl lysine isopeptide (Lys-Gly) (interchain with G-Cter in SUMO1); alternate cross-link involves residue Lys379. Lys379 participates in a covalent cross-link: Glycyl lysine isopeptide (Lys-Gly) (interchain with G-Cter in SUMO2); alternate. 2 C2H2-type zinc fingers span residues 387–409 (HKCR…LRSH) and 415–437 (YVCP…LQRH). Residue Lys441 forms a Glycyl lysine isopeptide (Lys-Gly) (interchain with G-Cter in SUMO2) linkage. Residues 471 to 521 (DESSLSVDAEPVPVTGTPSLGLPQKLTSGPNSRDLMGGSLPNDMQPGPSPE) are disordered. Lys557 participates in a covalent cross-link: Glycyl lysine isopeptide (Lys-Gly) (interchain with G-Cter in SUMO2). C2H2-type zinc fingers lie at residues 573–595 (NECL…YRTH) and 601–623 (FQCK…LGVH). Glycyl lysine isopeptide (Lys-Gly) (interchain with G-Cter in SUMO2) cross-links involve residues Lys604 and Lys630. The C2H2-type 6 zinc-finger motif lies at 633–655 (HSCPICQKKFTNAVMLQQHIRMH). Disordered regions lie at residues 682-716 (ENGS…STVS) and 752-835 (RQSS…SLPP). Positions 693 to 704 (DAAEGMEAEEVC) are enriched in acidic residues. Polar residues-rich tracts occupy residues 707–716 (DVPSGPSTVS) and 752–761 (RQSSRENSSL). Phosphoserine occurs at positions 785 and 798. Positions 798–809 (SPANSQAGSVKS) are enriched in polar residues. Positions 810–829 (RSPEGHKAEGVESCRVDTEG) are enriched in basic and acidic residues. Lys846 participates in a covalent cross-link: Glycyl lysine isopeptide (Lys-Gly) (interchain with G-Cter in SUMO1); alternate. A Glycyl lysine isopeptide (Lys-Gly) (interchain with G-Cter in SUMO2); alternate cross-link involves residue Lys846. The segment at 880 to 902 (HCCTRCGKNFSSASALQIHERTH) adopts a C2H2-type 7 zinc-finger fold. Lys906 is covalently cross-linked (Glycyl lysine isopeptide (Lys-Gly) (interchain with G-Cter in SUMO2)). The segment at 908-930 (FVCNICGRAFTTKGNLKVHYMTH) adopts a C2H2-type 8 zinc-finger fold. Glycyl lysine isopeptide (Lys-Gly) (interchain with G-Cter in SUMO2) cross-links involve residues Lys942 and Lys957. Ser1029 bears the Phosphoserine mark.

It belongs to the sal C2H2-type zinc-finger protein family. Interacts with POU5F1/OCT4. Interacts with NANOG. Interacts with BEND3. Interacts with NSD2 (via PHD-type zinc fingers 1, 2 and 3). Interacts with NRBP1. In terms of processing, sumoylation with both SUMO1 and SUMO2 regulates the stability, subcellular localization, transcriptional activity, and may reduce interaction with POU5F1/OCT4.

The protein localises to the cytoplasm. It localises to the nucleus. In terms of biological role, transcription factor with a key role in the maintenance and self-renewal of embryonic and hematopoietic stem cells. This chain is Sal-like protein 4 (Sall4), found in Mus musculus (Mouse).